The sequence spans 367 residues: Damage-control phosphatase At2g17340 (367 aa).

Methionine 1 is subject to N-acetylmethionine. Aspartate 220, asparagine 221, and aspartate 256 together coordinate Mn(2+). Residues 318–322 (EGMGR) carry the Subfamily II EGMGR motif motif.

It belongs to the damage-control phosphatase family. Phosphopantetheine phosphatase II subfamily. Multimer. It depends on Mn(2+) as a cofactor. Ni(2+) is required as a cofactor.

Its activity is regulated as follows. Activity is strongly promoted by Co(2+), Ni(2+), Mg(2+), Cu(2+) and Mn(2+). Activity is inhibited by EDTA. Metal-dependent phosphatase with probable damage-control functions. Shows phosphatase activity against several substrates, including sugar phosphates and p-nitrophenyl phosphate(pNPP). Prefers sugar phosphate substrates, including the extremely potent glycating agents ribose-5-phosphate and erythrose-4-phosphate. In Arabidopsis thaliana (Mouse-ear cress), this protein is Damage-control phosphatase At2g17340.